We begin with the raw amino-acid sequence, 171 residues long: Adenine phosphoribosyltransferase (171 aa).

The protein belongs to the purine/pyrimidine phosphoribosyltransferase family. As to quaternary structure, homodimer.

The protein localises to the cytoplasm. The catalysed reaction is AMP + diphosphate = 5-phospho-alpha-D-ribose 1-diphosphate + adenine. It participates in purine metabolism; AMP biosynthesis via salvage pathway; AMP from adenine: step 1/1. In terms of biological role, catalyzes a salvage reaction resulting in the formation of AMP, that is energically less costly than de novo synthesis. The chain is Adenine phosphoribosyltransferase from Solidesulfovibrio magneticus (strain ATCC 700980 / DSM 13731 / RS-1) (Desulfovibrio magneticus).